A 198-amino-acid polypeptide reads, in one-letter code: dITP/XTP pyrophosphatase (198 aa).

11-16 (THNPGK) serves as a coordination point for substrate. Mg(2+)-binding residues include glutamate 44 and aspartate 73. Aspartate 73 functions as the Proton acceptor in the catalytic mechanism. Substrate-binding positions include serine 74, 156–159 (FGYD), lysine 179, and 184–185 (HR).

The protein belongs to the HAM1 NTPase family. In terms of assembly, homodimer. The cofactor is Mg(2+).

It carries out the reaction XTP + H2O = XMP + diphosphate + H(+). The catalysed reaction is dITP + H2O = dIMP + diphosphate + H(+). It catalyses the reaction ITP + H2O = IMP + diphosphate + H(+). In terms of biological role, pyrophosphatase that catalyzes the hydrolysis of nucleoside triphosphates to their monophosphate derivatives, with a high preference for the non-canonical purine nucleotides XTP (xanthosine triphosphate), dITP (deoxyinosine triphosphate) and ITP. Seems to function as a house-cleaning enzyme that removes non-canonical purine nucleotides from the nucleotide pool, thus preventing their incorporation into DNA/RNA and avoiding chromosomal lesions. The polypeptide is dITP/XTP pyrophosphatase (ysnA) (Bacillus subtilis (strain 168)).